A 162-amino-acid polypeptide reads, in one-letter code: Protein cornichon homolog 2 (162 aa).

Residues 1–10 (MAFTFAAFCY) are Cytoplasmic-facing. Residues 11 to 31 (MLTLVLCASLIFFIIWHIIAF) traverse the membrane as a helical segment. The Lumenal segment spans residues 32–72 (DDLRTDFKDPIEQGNPSRARERIKNVERVCCLLRKLVVPEY). A helical transmembrane segment spans residues 73-93 (CIHGLFCLMFMCAAEWVTLGL). The Cytoplasmic segment spans residues 94–138 (NIPLLFYHLWRYFHRPADGSEVMFDPVSIMNVDILNYCQKEAWCK). The helical transmembrane segment at 139–161 (LAFYLLSFFYYLYRVGATVRYVS) threads the bilayer. Ala-162 is a topological domain (lumenal).

The protein belongs to the cornichon family.

It localises to the membrane. Regulates the trafficking and gating properties of AMPA-selective glutamate receptors (AMPARs). In Xenopus laevis (African clawed frog), this protein is Protein cornichon homolog 2 (cnih2).